Here is a 73-residue protein sequence, read N- to C-terminus: Translation initiation factor IF-1 (73 aa).

The S1-like domain maps to 1–72 (MSKDDLIQFT…TKGRVILRHQ (72 aa)).

Belongs to the IF-1 family. In terms of assembly, component of the 30S ribosomal translation pre-initiation complex which assembles on the 30S ribosome in the order IF-2 and IF-3, IF-1 and N-formylmethionyl-tRNA(fMet); mRNA recruitment can occur at any time during PIC assembly.

The protein resides in the cytoplasm. One of the essential components for the initiation of protein synthesis. Stabilizes the binding of IF-2 and IF-3 on the 30S subunit to which N-formylmethionyl-tRNA(fMet) subsequently binds. Helps modulate mRNA selection, yielding the 30S pre-initiation complex (PIC). Upon addition of the 50S ribosomal subunit IF-1, IF-2 and IF-3 are released leaving the mature 70S translation initiation complex. The protein is Translation initiation factor IF-1 of Rickettsia bellii (strain OSU 85-389).